The primary structure comprises 668 residues: Kelch repeat-containing protein ARB_01230 (668 aa).

An N-terminal signal peptide occupies residues 1-32 (MEVGRFASKSASMTYLLLVLLVGFILPQQGQH). Residues 33–522 (AHARTLARRD…GSGSDGPNIA (490 aa)) are Extracellular-facing. Asn-60 carries an N-linked (GlcNAc...) asparagine glycan. Kelch repeat units lie at residues 62–108 (TLYI…PRGD) and 125–176 (SLFL…ANIP). N-linked (GlcNAc...) asparagine glycans are attached at residues Asn-251 and Asn-291. Kelch repeat units follow at residues 283–331 (ILGL…AVAA), 340–395 (QVYL…IWNS), 396–445 (QIVV…ASQT), and 463–509 (VQSV…GPHA). A helical membrane pass occupies residues 523 to 543 (AIVAGVIAGCLGVLAIYLGFV). The Cytoplasmic segment spans residues 544–668 (TWLYRRRLAI…PRQTLRVINQ (125 aa)). Residues 611-642 (DNQRHNHTRSSSGGNFDHLAQPERPSTSSSVE) form a disordered region.

The protein localises to the membrane. Its subcellular location is the secreted. The protein is Kelch repeat-containing protein ARB_01230 of Arthroderma benhamiae (strain ATCC MYA-4681 / CBS 112371) (Trichophyton mentagrophytes).